Reading from the N-terminus, the 362-residue chain is 3-dehydroquinate synthase (362 aa).

NAD(+)-binding positions include 71–76 (DGEQYK), 105–109 (GVIGD), 129–130 (TT), Lys-142, Lys-151, and 169–172 (CLQT). Zn(2+) is bound by residues Glu-184, His-247, and His-264.

The protein belongs to the sugar phosphate cyclases superfamily. Dehydroquinate synthase family. Co(2+) serves as cofactor. It depends on Zn(2+) as a cofactor. Requires NAD(+) as cofactor.

It is found in the cytoplasm. It catalyses the reaction 7-phospho-2-dehydro-3-deoxy-D-arabino-heptonate = 3-dehydroquinate + phosphate. The protein operates within metabolic intermediate biosynthesis; chorismate biosynthesis; chorismate from D-erythrose 4-phosphate and phosphoenolpyruvate: step 2/7. Its function is as follows. Catalyzes the conversion of 3-deoxy-D-arabino-heptulosonate 7-phosphate (DAHP) to dehydroquinate (DHQ). The chain is 3-dehydroquinate synthase from Cronobacter sakazakii (strain ATCC BAA-894) (Enterobacter sakazakii).